The chain runs to 226 residues: ATP synthase F(0) complex subunit a (226 aa).

Helical transmembrane passes span 6–26, 68–88, 97–117, 138–158, 164–184, and 189–209; these read FASF…IILF, WSLM…LGLL, QLSM…VMGF, IPML…ALAV, ITAG…LSTI, and ALII…VALI.

This sequence belongs to the ATPase A chain family. As to quaternary structure, component of the ATP synthase complex composed at least of ATP5F1A/subunit alpha, ATP5F1B/subunit beta, ATP5MC1/subunit c (homooctomer), MT-ATP6/subunit a, MT-ATP8/subunit 8, ATP5ME/subunit e, ATP5MF/subunit f, ATP5MG/subunit g, ATP5MK/subunit k, ATP5MJ/subunit j, ATP5F1C/subunit gamma, ATP5F1D/subunit delta, ATP5F1E/subunit epsilon, ATP5PF/subunit F6, ATP5PB/subunit b, ATP5PD/subunit d, ATP5PO/subunit OSCP. ATP synthase complex consists of a soluble F(1) head domain (subunits alpha(3) and beta(3)) - the catalytic core - and a membrane F(0) domain - the membrane proton channel (subunits c, a, 8, e, f, g, k and j). These two domains are linked by a central stalk (subunits gamma, delta, and epsilon) rotating inside the F1 region and a stationary peripheral stalk (subunits F6, b, d, and OSCP). Interacts with DNAJC30; interaction is direct.

It is found in the mitochondrion inner membrane. The enzyme catalyses H(+)(in) = H(+)(out). Its function is as follows. Subunit a, of the mitochondrial membrane ATP synthase complex (F(1)F(0) ATP synthase or Complex V) that produces ATP from ADP in the presence of a proton gradient across the membrane which is generated by electron transport complexes of the respiratory chain. ATP synthase complex consist of a soluble F(1) head domain - the catalytic core - and a membrane F(1) domain - the membrane proton channel. These two domains are linked by a central stalk rotating inside the F(1) region and a stationary peripheral stalk. During catalysis, ATP synthesis in the catalytic domain of F(1) is coupled via a rotary mechanism of the central stalk subunits to proton translocation. With the subunit c (ATP5MC1), forms the proton-conducting channel in the F(0) domain, that contains two crucial half-channels (inlet and outlet) that facilitate proton movement from the mitochondrial intermembrane space (IMS) into the matrix. Protons are taken up via the inlet half-channel and released through the outlet half-channel, following a Grotthuss mechanism. This chain is ATP synthase F(0) complex subunit a, found in Pan troglodytes (Chimpanzee).